The sequence spans 112 residues: UPF0342 protein SPP_1392 (112 aa).

It belongs to the UPF0342 family.

This is UPF0342 protein SPP_1392 from Streptococcus pneumoniae (strain P1031).